The chain runs to 216 residues: Endoplasmic reticulum vesicle protein 25 (216 aa).

The N-terminal stretch at 1–20 (MASLKSLLSGFLLLAGAAQA) is a signal peptide. Over 21-185 (LKFDLEATSS…TNESTNNRVK (165 aa)) the chain is Lumenal. Residues 36-126 (RRCIRNFVNK…RRHVELDIDI (91 aa)) enclose the GOLD domain. Residues 186–206 (WFGMATTFLLIALWGWQIMYL) form a helical membrane-spanning segment. Topologically, residues 207-216 (RAYFRSKHLI) are cytoplasmic.

This sequence belongs to the EMP24/GP25L family.

It is found in the endoplasmic reticulum membrane. It localises to the golgi apparatus membrane. In terms of biological role, constituent of COPII-coated endoplasmic reticulum-derived transport vesicles. Required for efficient transport of a subset of secretory proteins to the Golgi. Facilitates retrograde transport from the Golgi to the endoplasmic reticulum. The chain is Endoplasmic reticulum vesicle protein 25 (erv-1) from Neurospora crassa (strain ATCC 24698 / 74-OR23-1A / CBS 708.71 / DSM 1257 / FGSC 987).